Here is a 360-residue protein sequence, read N- to C-terminus: DNA replication and repair protein RecF (360 aa).

30-37 (GQNGSGKT) serves as a coordination point for ATP.

Belongs to the RecF family.

The protein resides in the cytoplasm. Functionally, the RecF protein is involved in DNA metabolism; it is required for DNA replication and normal SOS inducibility. RecF binds preferentially to single-stranded, linear DNA. It also seems to bind ATP. The sequence is that of DNA replication and repair protein RecF from Shewanella loihica (strain ATCC BAA-1088 / PV-4).